The chain runs to 398 residues: Isochorismate synthase DhbC (398 aa).

At serine 271 the chain carries Phosphoserine.

It belongs to the isochorismate synthase family.

The catalysed reaction is chorismate = isochorismate. It participates in siderophore biosynthesis; bacillibactin biosynthesis. The polypeptide is Isochorismate synthase DhbC (dhbC) (Bacillus subtilis (strain 168)).